Reading from the N-terminus, the 151-residue chain is Transcription antitermination protein NusB (151 aa).

The protein belongs to the NusB family.

Involved in transcription antitermination. Required for transcription of ribosomal RNA (rRNA) genes. Binds specifically to the boxA antiterminator sequence of the ribosomal RNA (rrn) operons. In Thermodesulfovibrio yellowstonii (strain ATCC 51303 / DSM 11347 / YP87), this protein is Transcription antitermination protein NusB.